A 639-amino-acid polypeptide reads, in one-letter code: MGLNRFMRAMMVVFITANCITINPDIIFAATDSEDSSLNTDEWEEEKTEEQPSEVNTGPRYETAREVSSRDIKELEKSNKVRNTNKADLIAMLKEKAEKGPNINNNNSEQTENAAINEEASGADRPAIQVERRHPGLPSDSAAEIKKRRKAIASSDSELESLTYPDKPTKVNKKKVAKESVADASESDLDSSMQSADESSPQPLKANQQPFFPKVFKKIKDAGKWVRDKIDENPEVKKAIVDKSAGLIDQLLTKKKSEEVNASDFPPPPTDEELRLALPETPMLLGFNAPATSEPSSFEFPPPPTDEELRLALPETPMLLGFNAPATSEPSSFEFPPPPTEDELEIIRETASSLDSSFTRGDLASLRNAINRHSQNFSDFPPIPTEEELNGRGGRPTSEEFSSLNSGDFTDDENSETTEEEIDRLADLRDRGTGKHSRNAGFLPLNPFASSPVPSLSPKVSKISAPALISDITKKTPFKNPSQPLNVFNKKTTTKTVTKKPTPVKTAPKLAELPATKPQETVLRENKTPFIEKQAETNKQSINMPSLPVIQKEATESDKEEMKPQTEEKMVEESESANNANGKNRSAGIEEGKLIAKSAEDEKAKEEPGNHTTLILAMLAIGVFSLGAFIKIIQLRKNN.

The N-terminal stretch at 1–29 is a signal peptide; it reads MGLNRFMRAMMVVFITANCITINPDIIFA. Disordered stretches follow at residues 36–71, 132–212, 285–308, and 320–341; these read SSLN…SSRD, RRHP…QPFF, LGFN…TDEE, and LGFN…PPTE. Over residues 41-52 the composition is skewed to acidic residues; that stretch reads DEWEEEKTEEQP. Positions 62–71 are enriched in basic and acidic residues; the sequence is ETAREVSSRD. A compositionally biased stretch (polar residues) spans 190-210; the sequence is DSSMQSADESSPQPLKANQQP. A run of 2 repeats spans residues 264–298 and 299–333. The segment at 264–333 is 5 X approximate tandem repeats, Pro-rich; the sequence is DFPPPPTDEE…APATSEPSSF (70 aa). The 3; approximate repeat unit spans residues 334–378; sequence EFPPPPTEDELEIIRETASSLDSSFTRGDLASLRNAINRHSQNFS. The Cell attachment site signature appears at 360–362; it reads RGD. Disordered regions lie at residues 372-459 and 474-610; these read RHSQ…LSPK and KKTP…EPGN. A 4; approximate repeat occupies 379-417; sequence DFPPIPTEEELNGRGGRPTSEEFSSLNSGDFTDDENSET. Over residues 409–422 the composition is skewed to acidic residues; that stretch reads FTDDENSETTEEEI. The 5; truncated repeat unit spans residues 418-422; that stretch reads TEEEI. Over residues 423–433 the composition is skewed to basic and acidic residues; the sequence is DRLADLRDRGT. 2 stretches are compositionally biased toward low complexity: residues 450–459 and 490–509; these read SSPVPSLSPK and KKTT…TAPK. 2 stretches are compositionally biased toward basic and acidic residues: residues 553–572 and 588–609; these read EATE…KMVE and GIEE…EEPG. Residues 613 to 633 form a helical membrane-spanning segment; it reads TLILAMLAIGVFSLGAFIKII.

It localises to the cell membrane. Virulence factor required for host cell microfilament interaction. It induces actin assembly around the bacteria to allow it to move within the cytoplasm. It is involved in the actin polymerization process. It seems to act as a nucleator that induces the reorganization of the actin cytoskeleton. In Listeria monocytogenes serovar 1/2a (strain ATCC BAA-679 / EGD-e), this protein is Actin assembly-inducing protein (actA).